The sequence spans 401 residues: Collagen and calcium-binding EGF domain-containing protein 1 (401 aa).

The signal sequence occupies residues 1-22 (MIYPGRGASLSVAVALVLFSSG). Positions 126–167 (DIDECANNNETVCSQMCVNTPGSYRCDCHSGFYLEDDGKTCT) constitute an EGF-like; calcium-binding domain. Disulfide bonds link Cys130–Cys142, Cys138–Cys151, and Cys153–Cys166. Asn134 carries N-linked (GlcNAc...) asparagine glycosylation. Disordered stretches follow at residues 229–321 (TTNS…PGSF) and 344–401 (SRPL…DWPV). Collagen-like domains are found at residues 234–276 (LPGP…PIGP) and 286–319 (GRRG…GPPG). Residues 235-244 (PGPPGPPGPA) show a composition bias toward pro residues. Low complexity predominate over residues 246 to 258 (TPGAKGSSGSPGQ).

This sequence belongs to the CCBE1 family. In terms of tissue distribution, not expressed in blood or lymphatic endothelial cells, correlating spatially and temporally with the migration routes of endothelial cells that bud from the PCV, migrate in association with somite boundaries and seed the horizontal myoseptum region from where lymphatic precursors later migrate.

It is found in the secreted. In terms of biological role, required for lymphangioblast budding and angiogenic sprouting from venous endothelium during embryogenesis. Required for the formation of facial lymphatic structures. Necessary for lymphangiogenesis, but is probably not part of either the vegfc-vegfr3 signaling or sox18-prox1 transcriptional pathways. The protein is Collagen and calcium-binding EGF domain-containing protein 1 (ccbe1) of Danio rerio (Zebrafish).